The chain runs to 871 residues: MADPGDGPRAAPGDVAEPPGDESGTSGGEAFPLSSLANLFEGEEGSSSLSPVDASRPAGPGDGRPNLRMKFQGAFRKGVPNPIDLLESTLYESSVVPGPKKAPMDSLFDYGTYRHHPSDNKRWRRKVVEKQPQSPKAPAPQPPPILKVFNRPILFDIVSRGSTADLDGLLSYLLTHKKRLTDEEFREPSTGKTCLPKALLNLSNGRNDTIPVLLDIAERTGNMREFINSPFRDIYYRGQTALHIAIERRCKHYVELLVAQGADVHAQARGRFFQPKDEGGYFYFGELPLSLAACTNQPHIVNYLTENPHKKADMRRQDSRGNTVLHALVAIADNTRENTKFVTKMYDLLLLKCSRLFPDSNLETVLNNDGLSPLMMAAKTGKIGVFQHIIRREVTDEDTRHLSRKFKDWAYGPVYSSLYDLSSLDTCGEEVSVLEILVYNSKIENRHEMLAVEPINELLRDKWRKFGAVSFYINVVSYLCAMVIFTLTAYYQPLEGTPPYPYRTTVDYLRLAGEVITLLTGVLFFFTSIKDLFMKKCPGVNSLFVDGSFQLLYFIYSVLVVVSAALYLAGIEAYLAVMVFALVLGWMNALYFTRGLKLTGTYSIMIQKILFKDLFRFLLVYLLFMIGYASALVTLLNPCTNMKVCNEDQSNCTVPSYPACRDSETFSAFLLDLFKLTIGMGDLEMLSSAKYPVVFILLLVTYIILTFVLLLNMLIALMGETVGQVSKESKHIWKLQWATTILDIERSFPVFLRKAFRSGEMVTVGKSSDGTPDRRWCFRVDEVNWSHWNQNLGIINEDPGKSEIYQYYGFSHTMGRLRRDRWSSVVPRVVELNKNSGTDEVVVPLDNLGNPNCDGHQQGYAPKWRAEDAPL.

Disordered regions lie at residues 1 to 68 (MADP…PNLR) and 110 to 143 (YGTYRHHPSDNKRWRRKVVEKQPQSPKAPAPQPP). Topologically, residues 1–469 (MADPGDGPRA…RDKWRKFGAV (469 aa)) are cytoplasmic. Tyrosine 110 carries the post-translational modification Phosphotyrosine. A compositionally biased stretch (basic and acidic residues) spans 116 to 129 (HPSDNKRWRRKVVE). ATP is bound by residues lysine 192, lysine 197, asparagine 201, 236 to 239 (YRGQ), and arginine 248. ANK repeat units follow at residues 237-266 (RGQTALHIAIERRCKHYVELLVAQGADVHA) and 284-313 (FGELPLSLAACTNQPHIVNYLTENPHKKAD). 249-251 (RCK) provides a ligand contact to a 1,2-diacyl-sn-glycero-3-phospho-(1D-myo-inositol-4,5-bisphosphate). Tyrosine 253 bears the Phosphotyrosine mark. A 1,2-diacyl-sn-glycero-3-phospho-(1D-myo-inositol-4,5-bisphosphate) is bound by residues 296-299 (NQPH) and lysine 344. The ANK 3 repeat unit spans residues 369–398 (DGLSPLMMAAKTGKIGVFQHIIRREVTDED). A helical transmembrane segment spans residues 470–490 (SFYINVVSYLCAMVIFTLTAY). Over 491–507 (YQPLEGTPPYPYRTTVD) the chain is Extracellular. Residues 508-534 (YLRLAGEVITLLTGVLFFFTSIKDLFM) form a helical membrane-spanning segment. At 535-547 (KKCPGVNSLFVDG) the chain is on the cytoplasmic side. Residues 548–568 (SFQLLYFIYSVLVVVSAALYL) form a helical membrane-spanning segment. Residues 569 to 572 (AGIE) are Extracellular-facing. A helical membrane pass occupies residues 573–593 (AYLAVMVFALVLGWMNALYFT). At 594-608 (RGLKLTGTYSIMIQK) the chain is on the cytoplasmic side. Residues 609–636 (ILFKDLFRFLLVYLLFMIGYASALVTLL) traverse the membrane as a helical segment. Topologically, residues 637-665 (NPCTNMKVCNEDQSNCTVPSYPACRDSET) are extracellular. An intramembrane region (pore-forming) is located at residues 666–685 (FSAFLLDLFKLTIGMGDLEM). The short motif at 679–682 (GMGD) is the Selectivity filter element. Position 682 (aspartate 682) interacts with Ca(2+). Topologically, residues 686–693 (LSSAKYPV) are extracellular. Residues 694 to 722 (VFILLLVTYIILTFVLLLNMLIALMGETV) form a helical membrane-spanning segment. The Cytoplasmic portion of the chain corresponds to 723–871 (GQVSKESKHI…PKWRAEDAPL (149 aa)). Residue tyrosine 805 is modified to Phosphotyrosine. An interaction with calmodulin and ITPR3 region spans residues 812–831 (HTMGRLRRDRWSSVVPRVVE). Serine 824 carries the phosphoserine modification.

This sequence belongs to the transient receptor (TC 1.A.4) family. TrpV subfamily. TRPV4 sub-subfamily. As to quaternary structure, homotetramer. Interacts with calmodulin. Interacts with MAP7 and Src family Tyr protein kinases LYN, SRC, FYN, HCK, LCK and YES. Interacts with CTNNB1. The TRPV4 and CTNNB1 complex can interact with CDH1. Part of a complex containing MLC1, AQP4, HEPACAM and ATP1B1. Interacts with PACSIN1, PACSIN2 and PACSIN3 (via SH3 domain). Interacts with ITPR3. Interacts with AQP5; the interaction is probably indirect and regulates TRPV4 activation by hypotonicity. Interacts with ANO1. Interacts (via C-terminus) with PKD2 (via C-terminus). Interacts with DDX3X; this interaction is decreased when the channel is activated. In terms of processing, N-glycosylated. In terms of tissue distribution, expressed lung, spleen, kidney, testis, fat, and at very low levels in trigeminal ganglia.

The protein localises to the cell membrane. It is found in the apical cell membrane. The protein resides in the cell junction. Its subcellular location is the adherens junction. It localises to the cell projection. The protein localises to the cilium. It catalyses the reaction Ca(2+)(in) = Ca(2+)(out). In terms of biological role, non-selective calcium permeant cation channel involved in osmotic sensitivity and mechanosensitivity. Activation by exposure to hypotonicity within the physiological range exhibits an outward rectification. Also activated by heat, low pH, citrate and phorbol esters. Increase of intracellular Ca(2+) potentiates currents. Channel activity seems to be regulated by a calmodulin-dependent mechanism with a negative feedback mechanism. Acts as a regulator of intracellular Ca(2+) in synoviocytes. Plays an obligatory role as a molecular component in the nonselective cation channel activation induced by 4-alpha-phorbol 12,13-didecanoate and hypotonic stimulation in synoviocytes and also regulates production of IL-8. Together with PKD2, forms mechano- and thermosensitive channels in cilium. Promotes cell-cell junction formation in skin keratinocytes and plays an important role in the formation and/or maintenance of functional intercellular barriers. Negatively regulates expression of PPARGC1A, UCP1, oxidative metabolism and respiration in adipocytes. Regulates expression of chemokines and cytokines related to pro-inflammatory pathway in adipocytes. Together with AQP5, controls regulatory volume decrease in salivary epithelial cells. Required for normal development and maintenance of bone and cartilage. In its inactive state, may sequester DDX3X at the plasma membrane. When activated, the interaction between both proteins is affected and DDX3X relocalizes to the nucleus. In neurons of the central nervous system, could play a role in triggering voluntary water intake in response to increased sodium concentration in body fluid. This chain is Transient receptor potential cation channel subfamily V member 4 (Trpv4), found in Rattus norvegicus (Rat).